Here is a 199-residue protein sequence, read N- to C-terminus: Ribonuclease P protein subunit p25 (199 aa).

The span at 1 to 11 shows a compositional bias: basic and acidic residues; that stretch reads MENFRKVRSEE. Disordered stretches follow at residues 1-31 and 146-199; these read MENF…FADL and PRQL…DRTA. At S172 the chain carries Phosphoserine. Positions 190 to 199 are enriched in acidic residues; sequence PEAENEDRTA.

The protein belongs to the histone-like Alba family. Component of nuclear RNase P and RNase MRP ribonucleoproteins. RNase P consists of a catalytic RNA moiety and 10 different protein chains; POP1, POP4, POP5, POP7, RPP14, RPP21, RPP25, RPP30, RPP38 and RPP40. Within the RNase P complex, POP1, POP7 and RPP25 form the 'finger' subcomplex, POP5, RPP14, RPP40 and homodimeric RPP30 form the 'palm' subcomplex, and RPP21, POP4 and RPP38 form the 'wrist' subcomplex. All subunits of the RNase P complex interact with the catalytic RNA. Several subunits of RNase P are also part of the RNase MRP complex. RNase MRP consists of a catalytic RNA moiety and about 8 protein subunits; POP1, POP7, RPP25, RPP30, RPP38, RPP40 and possibly also POP4 and POP5. POP7 forms a heterodimer with RPP25 that binds to the P3 stem loop of the catalytic RNA.

The protein resides in the nucleus. The protein localises to the nucleolus. Its function is as follows. Component of ribonuclease P, a ribonucleoprotein complex that generates mature tRNA molecules by cleaving their 5'-ends. Also a component of the MRP ribonuclease complex, which cleaves pre-rRNA sequences. The sequence is that of Ribonuclease P protein subunit p25 (Rpp25) from Rattus norvegicus (Rat).